A 229-amino-acid chain; its full sequence is 5'-methylthioadenosine/S-adenosylhomocysteine nucleosidase (229 aa).

E12 acts as the Proton acceptor in catalysis. Substrate-binding positions include G78, I152, and 173-174; that span reads ME. Catalysis depends on D197, which acts as the Proton donor.

It belongs to the PNP/UDP phosphorylase family. MtnN subfamily.

The catalysed reaction is S-adenosyl-L-homocysteine + H2O = S-(5-deoxy-D-ribos-5-yl)-L-homocysteine + adenine. It catalyses the reaction S-methyl-5'-thioadenosine + H2O = 5-(methylsulfanyl)-D-ribose + adenine. It carries out the reaction 5'-deoxyadenosine + H2O = 5-deoxy-D-ribose + adenine. The protein operates within amino-acid biosynthesis; L-methionine biosynthesis via salvage pathway; S-methyl-5-thio-alpha-D-ribose 1-phosphate from S-methyl-5'-thioadenosine (hydrolase route): step 1/2. Functionally, catalyzes the irreversible cleavage of the glycosidic bond in both 5'-methylthioadenosine (MTA) and S-adenosylhomocysteine (SAH/AdoHcy) to adenine and the corresponding thioribose, 5'-methylthioribose and S-ribosylhomocysteine, respectively. Also cleaves 5'-deoxyadenosine, a toxic by-product of radical S-adenosylmethionine (SAM) enzymes, into 5-deoxyribose and adenine. This is 5'-methylthioadenosine/S-adenosylhomocysteine nucleosidase from Baumannia cicadellinicola subsp. Homalodisca coagulata.